A 75-amino-acid polypeptide reads, in one-letter code: Large ribosomal subunit protein bL31 (75 aa).

The protein belongs to the bacterial ribosomal protein bL31 family. Type A subfamily. In terms of assembly, part of the 50S ribosomal subunit.

Its function is as follows. Binds the 23S rRNA. The chain is Large ribosomal subunit protein bL31 from Pelodictyon phaeoclathratiforme (strain DSM 5477 / BU-1).